Consider the following 209-residue polypeptide: MARYIGPTCKLARREGADLSLKSPARALDSKCKLEQKPGQHGATARKGKLSDYATQLREKQKVKRIYGLLERQFRNYYKKASTKKGNTGENLLQLLETRLDNVVYRMGFAVTRPAARQLVSHRGVTVNGKSVNLASYQVKAGDAIALSEKAAKQLRVQEALTVAAQHDLSPSWVEVDSGKFTGIFKAVPDRSDLPADINEALIVELYSK.

Residues 98-161 (TRLDNVVYRM…AKQLRVQEAL (64 aa)) enclose the S4 RNA-binding domain.

It belongs to the universal ribosomal protein uS4 family. In terms of assembly, part of the 30S ribosomal subunit. Contacts protein S5. The interaction surface between S4 and S5 is involved in control of translational fidelity.

In terms of biological role, one of the primary rRNA binding proteins, it binds directly to 16S rRNA where it nucleates assembly of the body of the 30S subunit. Its function is as follows. With S5 and S12 plays an important role in translational accuracy. This chain is Small ribosomal subunit protein uS4, found in Stenotrophomonas maltophilia (strain R551-3).